The chain runs to 130 residues: S-adenosylmethionine decarboxylase proenzyme (130 aa).

Residue Ser-63 is the Schiff-base intermediate with substrate; via pyruvic acid of the active site. Ser-63 carries the post-translational modification Pyruvic acid (Ser); by autocatalysis. His-68 acts as the Proton acceptor; for processing activity in catalysis. Catalysis depends on Cys-83, which acts as the Proton donor; for catalytic activity.

It belongs to the prokaryotic AdoMetDC family. Type 1 subfamily. In terms of assembly, heterotetramer of two alpha and two beta chains arranged as a dimer of alpha/beta heterodimers. Pyruvate serves as cofactor. In terms of processing, is synthesized initially as an inactive proenzyme. Formation of the active enzyme involves a self-maturation process in which the active site pyruvoyl group is generated from an internal serine residue via an autocatalytic post-translational modification. Two non-identical subunits are generated from the proenzyme in this reaction, and the pyruvate is formed at the N-terminus of the alpha chain, which is derived from the carboxyl end of the proenzyme. The post-translation cleavage follows an unusual pathway, termed non-hydrolytic serinolysis, in which the side chain hydroxyl group of the serine supplies its oxygen atom to form the C-terminus of the beta chain, while the remainder of the serine residue undergoes an oxidative deamination to produce ammonia and the pyruvoyl group blocking the N-terminus of the alpha chain.

It catalyses the reaction S-adenosyl-L-methionine + H(+) = S-adenosyl 3-(methylsulfanyl)propylamine + CO2. Its pathway is amine and polyamine biosynthesis; S-adenosylmethioninamine biosynthesis; S-adenosylmethioninamine from S-adenosyl-L-methionine: step 1/1. Catalyzes the decarboxylation of S-adenosylmethionine to S-adenosylmethioninamine (dcAdoMet), the propylamine donor required for the synthesis of the polyamines spermine and spermidine from the diamine putrescine. In Thermosipho melanesiensis (strain DSM 12029 / CIP 104789 / BI429), this protein is S-adenosylmethionine decarboxylase proenzyme.